We begin with the raw amino-acid sequence, 255 residues long: Imidazole glycerol phosphate synthase subunit HisF (255 aa).

Catalysis depends on residues Asp-13 and Asp-132.

This sequence belongs to the HisA/HisF family. As to quaternary structure, heterodimer of HisH and HisF.

The protein resides in the cytoplasm. The catalysed reaction is 5-[(5-phospho-1-deoxy-D-ribulos-1-ylimino)methylamino]-1-(5-phospho-beta-D-ribosyl)imidazole-4-carboxamide + L-glutamine = D-erythro-1-(imidazol-4-yl)glycerol 3-phosphate + 5-amino-1-(5-phospho-beta-D-ribosyl)imidazole-4-carboxamide + L-glutamate + H(+). Its pathway is amino-acid biosynthesis; L-histidine biosynthesis; L-histidine from 5-phospho-alpha-D-ribose 1-diphosphate: step 5/9. Its function is as follows. IGPS catalyzes the conversion of PRFAR and glutamine to IGP, AICAR and glutamate. The HisF subunit catalyzes the cyclization activity that produces IGP and AICAR from PRFAR using the ammonia provided by the HisH subunit. The protein is Imidazole glycerol phosphate synthase subunit HisF of Leptospira biflexa serovar Patoc (strain Patoc 1 / ATCC 23582 / Paris).